A 370-amino-acid chain; its full sequence is Pulmonary surfactant-associated protein B (370 aa).

The N-terminal stretch at 1–24 (MAKSHLPPWLLLLLLPTLCGPGTA) is a signal peptide. Residues 25–184 (VWATSPLACA…PHTQDLSAQR (160 aa)) constitute a propeptide that is removed on maturation. The Saposin A-type domain occupies 26–66 (WATSPLACAQGPEFWCQSLEQALQCKALGHCLQEVWGHVGA). Saposin B-type domains follow at residues 66–148 (ADDL…QPGS), 188–265 (PLPL…SSVD), and 284–359 (QDPE…VATL). 9 disulfide bridges follow: Cys70-Cys144, Cys73-Cys138, Cys101-Cys113, Cys192-Cys261, Cys195-Cys255, Cys219-Cys230, Cys288-Cys355, Cys291-Cys349, and Cys314-Cys324. Positions 264 to 370 (VDSIGQVPPT…PLQCIQSPHF (107 aa)) are excised as a propeptide. N-linked (GlcNAc...) asparagine glycosylation is present at Asn300.

Homodimer; disulfide-linked.

Its subcellular location is the secreted. It is found in the extracellular space. The protein resides in the surface film. Functionally, pulmonary surfactant-associated proteins promote alveolar stability by lowering the surface tension at the air-liquid interface in the peripheral air spaces. SP-B increases the collapse pressure of palmitic acid to nearly 70 millinewtons per meter. In Oryctolagus cuniculus (Rabbit), this protein is Pulmonary surfactant-associated protein B (SFTPB).